Consider the following 777-residue polypeptide: ATP-dependent RNA helicase mak5 (777 aa).

Residues 1–10 show a composition bias toward basic and acidic residues; it reads MGQKRQRDSK. 2 disordered regions span residues 1–36 and 86–177; these read MGQKRQRDSKSSTFHAKKRKKAENATAPDSDDGWDG and AGKP…IQHD. The span at 101 to 119 shows a compositional bias: acidic residues; the sequence is DENSEYDEEWSGFSDDDAD. Residues 130-171 are compositionally biased toward basic and acidic residues; that stretch reads EKPEKSDTKADKKSEKNADKKEAKDAKKKEAKAAKKEQKEKG. Positions 201–229 match the Q motif motif; sequence SAWDSLGLSPEILTGLSKMKFASPTSVQE. The Helicase ATP-binding domain occupies 232 to 444; it reads IPQILEGHDV…AGKGKWTGGD (213 aa). 245 to 252 provides a ligand contact to ATP; it reads ASTGSGKT. A DEAD box motif is present at residues 370–373; the sequence is DEAD. Residues 393–417 form a disordered region; sequence RVEDGEVPGGENQASEEESDPSSER. A Helicase C-terminal domain is found at 496 to 646; it reads FLYTLLLYHP…KLPLESLELD (151 aa). A disordered region spans residues 692-720; it reads DSEEFDESNGKGRGRGRGRHQKQKEVGSV. Residues 703–713 show a composition bias toward basic residues; sequence GRGRGRGRHQK.

Belongs to the DEAD box helicase family. DDX24/MAK5 subfamily.

The protein localises to the nucleus. Its subcellular location is the nucleolus. The enzyme catalyses ATP + H2O = ADP + phosphate + H(+). In terms of biological role, ATP-binding RNA helicase involved in the biogenesis of 60S ribosomal subunits and is required for the normal formation of 25S and 5.8S rRNAs. This Neosartorya fischeri (strain ATCC 1020 / DSM 3700 / CBS 544.65 / FGSC A1164 / JCM 1740 / NRRL 181 / WB 181) (Aspergillus fischerianus) protein is ATP-dependent RNA helicase mak5 (mak5).